Here is a 321-residue protein sequence, read N- to C-terminus: Altered inheritance of mitochondria protein 18, mitochondrial (321 aa).

Residues 1–72 constitute a mitochondrion transit peptide; sequence MDRGRCANML…LLATSLYYRD (72 aa).

It belongs to the AIM18/AIM46 family.

It is found in the mitochondrion. The chain is Altered inheritance of mitochondria protein 18, mitochondrial (AIM18) from Saccharomyces cerevisiae (strain AWRI1631) (Baker's yeast).